The chain runs to 419 residues: UDP-N-acetylglucosamine 1-carboxyvinyltransferase (419 aa).

22-23 (KN) is a phosphoenolpyruvate binding site. Arginine 92 lines the UDP-N-acetyl-alpha-D-glucosamine pocket. The active-site Proton donor is the cysteine 116. Position 116 is a 2-(S-cysteinyl)pyruvic acid O-phosphothioketal (cysteine 116). UDP-N-acetyl-alpha-D-glucosamine is bound by residues 121 to 125 (RPIDL), aspartate 306, and isoleucine 328.

Belongs to the EPSP synthase family. MurA subfamily.

Its subcellular location is the cytoplasm. The enzyme catalyses phosphoenolpyruvate + UDP-N-acetyl-alpha-D-glucosamine = UDP-N-acetyl-3-O-(1-carboxyvinyl)-alpha-D-glucosamine + phosphate. It functions in the pathway cell wall biogenesis; peptidoglycan biosynthesis. Its function is as follows. Cell wall formation. Adds enolpyruvyl to UDP-N-acetylglucosamine. Target for the antibiotic fosfomycin. Involved in heteroresistance to antibiotic fosfomycin. Heteroresistance is the ability of a clonal population to grow one or several subpopulations at a frequency of 10(-7) to 10(-3) in the presence of a higher antibiotic concentration than that predicted to be effective by measurement of the minimum inhibitory concentration (MIC). The polypeptide is UDP-N-acetylglucosamine 1-carboxyvinyltransferase (Streptococcus pneumoniae serotype 2 (strain D39 / NCTC 7466)).